A 735-amino-acid chain; its full sequence is Glutamine-dependent NAD(+) synthetase (735 aa).

The region spanning 4–274 is the CN hydrolase domain; that stretch reads LRVATCNLNQ…VEVLDALVDL (271 aa). Glu-44 functions as the Proton acceptor; for glutaminase activity in the catalytic mechanism. Residue Lys-113 is the For glutaminase activity of the active site. Catalysis depends on Cys-174, which acts as the Nucleophile; for glutaminase activity. The segment at 324–711 is ligase; the sequence is YHRPEEEIAF…STEGELRRRK (388 aa). 354–361 provides a ligand contact to ATP; the sequence is PLSGGADS. Residue Ser-356 is part of the active site.

It in the C-terminal section; belongs to the NAD synthetase family.

The catalysed reaction is deamido-NAD(+) + L-glutamine + ATP + H2O = L-glutamate + AMP + diphosphate + NAD(+) + H(+). Its pathway is cofactor biosynthesis; NAD(+) biosynthesis; NAD(+) from deamido-NAD(+) (L-Gln route): step 1/1. The sequence is that of Glutamine-dependent NAD(+) synthetase from Oryza sativa subsp. indica (Rice).